A 167-amino-acid polypeptide reads, in one-letter code: Antibacterial peptide PMAP-37 (167 aa).

Residues 1 to 29 form the signal peptide; the sequence is METQRASLCLGRWSLWLLLLALVVPSASA. The propeptide occupies 30–130; the sequence is QALSYREAVL…DITCNEIQSV (101 aa). Intrachain disulfides connect cysteine 85–cysteine 96 and cysteine 107–cysteine 124.

Belongs to the cathelicidin family.

Its subcellular location is the secreted. In terms of biological role, exerts antimicrobial activity against both Gram-positive and negative bacteria with minimal inhibitory concentrations ranging over 1-4 micro molar. Its activity appears to be mediated by its ability to damage bacterial membranes. The polypeptide is Antibacterial peptide PMAP-37 (PMAP37) (Sus scrofa (Pig)).